Here is a 183-residue protein sequence, read N- to C-terminus: NADH-quinone oxidoreductase subunit B (183 aa).

Positions 60, 61, 125, and 154 each coordinate [4Fe-4S] cluster.

It belongs to the complex I 20 kDa subunit family. In terms of assembly, NDH-1 is composed of 14 different subunits. Subunits NuoB, C, D, E, F, and G constitute the peripheral sector of the complex. It depends on [4Fe-4S] cluster as a cofactor.

The protein localises to the cell inner membrane. The enzyme catalyses a quinone + NADH + 5 H(+)(in) = a quinol + NAD(+) + 4 H(+)(out). In terms of biological role, NDH-1 shuttles electrons from NADH, via FMN and iron-sulfur (Fe-S) centers, to quinones in the respiratory chain. The immediate electron acceptor for the enzyme in this species is believed to be ubiquinone. Couples the redox reaction to proton translocation (for every two electrons transferred, four hydrogen ions are translocated across the cytoplasmic membrane), and thus conserves the redox energy in a proton gradient. In Desulfovibrio desulfuricans (strain ATCC 27774 / DSM 6949 / MB), this protein is NADH-quinone oxidoreductase subunit B.